The primary structure comprises 320 residues: Minor outer capsid protein P9 (320 aa).

Positions 297–320 (RNDDEEELAGSEFTSLLSDDGRMG) are disordered.

The protein belongs to the phytoreovirus minor outer capsid protein P9 family.

The protein resides in the virion. The protein localises to the host cytoplasm. Functionally, minor outer capsid protein. This Rice gall dwarf virus (RGDV) protein is Minor outer capsid protein P9.